A 182-amino-acid chain; its full sequence is tRNA-splicing endonuclease (182 aa).

Residues Tyr-119, His-127, and Lys-158 contribute to the active site.

Belongs to the tRNA-intron endonuclease family. Archaeal short subfamily. As to quaternary structure, homotetramer; although the tetramer contains four active sites, only two participate in the cleavage. Therefore, it should be considered as a dimer of dimers.

It catalyses the reaction pretRNA = a 3'-half-tRNA molecule with a 5'-OH end + a 5'-half-tRNA molecule with a 2',3'-cyclic phosphate end + an intron with a 2',3'-cyclic phosphate and a 5'-hydroxyl terminus.. Endonuclease that removes tRNA introns. Cleaves pre-tRNA at the 5'- and 3'-splice sites to release the intron. The products are an intron and two tRNA half-molecules bearing 2',3' cyclic phosphate and 5'-OH termini. Recognizes a pseudosymmetric substrate in which 2 bulged loops of 3 bases are separated by a stem of 4 bp. This is tRNA-splicing endonuclease from Saccharolobus solfataricus (strain ATCC 35092 / DSM 1617 / JCM 11322 / P2) (Sulfolobus solfataricus).